The following is a 332-amino-acid chain: Tryptophan--tRNA ligase (332 aa).

ATP contacts are provided by residues 11-13 (TST) and 19-20 (GN). The 'HIGH' region signature appears at 12–20 (STGKLTLGN). An L-tryptophan-binding site is contributed by Asp140. Residues 152-154 (GQD), Ile191, and 200-204 (KMSKS) each bind ATP. Residues 200 to 204 (KMSKS) carry the 'KMSKS' region motif.

The protein belongs to the class-I aminoacyl-tRNA synthetase family. In terms of assembly, homodimer.

Its subcellular location is the cytoplasm. It catalyses the reaction tRNA(Trp) + L-tryptophan + ATP = L-tryptophyl-tRNA(Trp) + AMP + diphosphate + H(+). In terms of biological role, catalyzes the attachment of tryptophan to tRNA(Trp). This chain is Tryptophan--tRNA ligase, found in Mycoplasmopsis pulmonis (strain UAB CTIP) (Mycoplasma pulmonis).